We begin with the raw amino-acid sequence, 394 residues long: Purine ribonucleoside efflux pump NepI (394 aa).

At 1–21 the chain is on the cytoplasmic side; it reads MSEFIAENRGADAITRPNWSA. A helical membrane pass occupies residues 22–42; the sequence is VFSVAFCVACLIIVEFLPVSL. Over 43 to 54 the chain is Periplasmic; the sequence is LTPMAQDLGISE. Residues 55–75 traverse the membrane as a helical segment; it reads GVAGQSVTVTAFVAMFASLFI. Over 76–85 the chain is Cytoplasmic; the sequence is TQTIQATDRR. A helical transmembrane segment spans residues 86–106; that stretch reads YVVILFAVLLTISCLLVSFAN. A topological domain (periplasmic) is located at residue Ser-107. The chain crosses the membrane as a helical span at residues 108-128; it reads FSLLLIGRACLGLALGGFWAM. The Cytoplasmic segment spans residues 129-147; it reads SASLTMRLVPPRTVPKALS. A helical membrane pass occupies residues 148–168; it reads VIFGAVSIALVIAAPLGSFLG. The Periplasmic portion of the chain corresponds to 169-175; it reads ELIGWRN. A helical transmembrane segment spans residues 176–196; that stretch reads VFNAAAVMGVLCIFWIIKSLP. The Cytoplasmic segment spans residues 197–215; the sequence is SLPGKPSHQKQNTFRLLQR. The chain crosses the membrane as a helical span at residues 216–236; sequence PGVMAGMIAIFMSFAGQFAFF. Residues 237–255 lie on the Periplasmic side of the membrane; that stretch reads TYIRPVYMNLAGFGVDGLT. The chain crosses the membrane as a helical span at residues 256–276; the sequence is LVLLSFGIASFIGTSLSSFIL. The Cytoplasmic segment spans residues 277–281; it reads KRSVK. The helical transmembrane segment at 282–302 threads the bilayer; that stretch reads LALAGAPLILAVSALVLTLCG. The Periplasmic segment spans residues 303–305; sequence SDK. A helical transmembrane segment spans residues 306–326; that stretch reads IVATGVAIIWGLTFALVPVGW. Residues 327–343 lie on the Cytoplasmic side of the membrane; the sequence is STWSTRSLADQAEKAGS. The helical transmembrane segment at 344 to 364 threads the bilayer; it reads IQVAVIQLANTCGAAIGGYAL. Topologically, residues 365–366 are periplasmic; it reads DN. The chain crosses the membrane as a helical span at residues 367 to 387; the sequence is IGLTSPLMLSGTLMLLTALLV. At 388-394 the chain is on the cytoplasmic side; the sequence is TAKVKMK.

The protein belongs to the major facilitator superfamily. DHA1 family. NepI (TC 2.A.1.2.26) subfamily.

It localises to the cell inner membrane. It carries out the reaction inosine(in) + H(+)(out) = inosine(out) + H(+)(in). It catalyses the reaction guanosine(in) + H(+)(out) = guanosine(out) + H(+)(in). In terms of biological role, involved in the efflux of purine ribonucleosides, such as inosine and guanosine. The protein is Purine ribonucleoside efflux pump NepI of Shigella dysenteriae serotype 1 (strain Sd197).